The sequence spans 376 residues: MDVLAEANGTFALNLLKTLGKDNSKNVFFSPMSMSCALAMVYMGAKGNTAAQMAQVLSFNKSGGGGDIHQGFQSLLTEVNKTGTQYLLRTANRLFGEKSCDFLSSFRDSCQKFYQAEMEELDFISAVEKSRKHINSWVAEKTEGKIAELLSPGSVDPLTRLVLVNAVYFKGNWNEQFDKENTEERRFKVSKNEEKPVQMMFMQSTFRKTYIGEIFTQILVLPYVGKELNMIIMLPDETTDLRTVEKELTYEKFVEWTRLDMMDEEKVEVSLPRFKLEESYDMESVLCSLGMTDAFELGKADFSGMSKADLCLSKVVHKSFVEVNEEGTEAAAATAAIMMMRCARFVPRFCADHPFLFFIQHSKTNGVLFCGRFSSP.

Methionine 1 bears the N-acetylmethionine mark. At serine 151 the chain carries Phosphoserine. Lysine 195 is subject to N6-acetyllysine.

It belongs to the serpin family. Ov-serpin subfamily. In terms of assembly, forms a complex with the monomeric form of beta-tryptase.

The protein resides in the cytoplasm. In terms of biological role, inhibitor of cathepsin G, kallikrein-8 and thrombin. May play an important role in the inner ear in the protection against leakage of lysosomal content during stress. May be involved in the regulation of serine proteinases present in the brain or extravasated from the blood. The sequence is that of Serpin B6 (SERPINB6) from Macaca fascicularis (Crab-eating macaque).